Here is a 344-residue protein sequence, read N- to C-terminus: Heat-inducible transcription repressor HrcA (344 aa).

The protein belongs to the HrcA family.

Functionally, negative regulator of class I heat shock genes (grpE-dnaK-dnaJ and groELS operons). Prevents heat-shock induction of these operons. This chain is Heat-inducible transcription repressor HrcA, found in Streptococcus equi subsp. equi (strain 4047).